The sequence spans 490 residues: Glutamyl-tRNA(Gln) amidotransferase subunit A (490 aa).

Active-site charge relay system residues include lysine 78 and serine 153. Serine 177 (acyl-ester intermediate) is an active-site residue.

The protein belongs to the amidase family. GatA subfamily. In terms of assembly, heterotrimer of A, B and C subunits.

The catalysed reaction is L-glutamyl-tRNA(Gln) + L-glutamine + ATP + H2O = L-glutaminyl-tRNA(Gln) + L-glutamate + ADP + phosphate + H(+). Allows the formation of correctly charged Gln-tRNA(Gln) through the transamidation of misacylated Glu-tRNA(Gln) in organisms which lack glutaminyl-tRNA synthetase. The reaction takes place in the presence of glutamine and ATP through an activated gamma-phospho-Glu-tRNA(Gln). This Desulforapulum autotrophicum (strain ATCC 43914 / DSM 3382 / VKM B-1955 / HRM2) (Desulfobacterium autotrophicum) protein is Glutamyl-tRNA(Gln) amidotransferase subunit A.